The following is a 214-amino-acid chain: Isochorismatase family protein 2B (214 aa).

The protein belongs to the isochorismatase family.

This Dictyostelium discoideum (Social amoeba) protein is Isochorismatase family protein 2B.